Here is a 1378-residue protein sequence, read N- to C-terminus: DNA-directed RNA polymerase subunit beta (1378 aa).

The protein belongs to the RNA polymerase beta chain family. In terms of assembly, the RNAP catalytic core consists of 2 alpha, 1 beta, 1 beta' and 1 omega subunit. When a sigma factor is associated with the core the holoenzyme is formed, which can initiate transcription.

It catalyses the reaction RNA(n) + a ribonucleoside 5'-triphosphate = RNA(n+1) + diphosphate. Functionally, DNA-dependent RNA polymerase catalyzes the transcription of DNA into RNA using the four ribonucleoside triphosphates as substrates. The sequence is that of DNA-directed RNA polymerase subunit beta from Dinoroseobacter shibae (strain DSM 16493 / NCIMB 14021 / DFL 12).